A 247-amino-acid chain; its full sequence is MESSSTIDPAEVAKFEAMAAEWWNPHGKFKPLHQMNPCRLDYITQQIAAEFDRDLSAPLPFEGLRLLDIGCGGGLLSEPMARLGAEVIGADAAPRNIPVAKLHAEQSGLAIDYRNTTAEALAAAGERFDVVLNMEVVEHVADPLAYLTACRELLKPGGLMICSTLNRNPKSFAMAIVGAEWVMRWLPKGTHDWSKFITPDELYDLIRKAGLDPVDRKGMVFNPVSWSWSLSARDLSVNYVTASVRRT.

Positions 39, 70, 91, and 134 each coordinate S-adenosyl-L-methionine.

Belongs to the methyltransferase superfamily. UbiG/COQ3 family.

The enzyme catalyses a 3-demethylubiquinol + S-adenosyl-L-methionine = a ubiquinol + S-adenosyl-L-homocysteine + H(+). It carries out the reaction a 3-(all-trans-polyprenyl)benzene-1,2-diol + S-adenosyl-L-methionine = a 2-methoxy-6-(all-trans-polyprenyl)phenol + S-adenosyl-L-homocysteine + H(+). It functions in the pathway cofactor biosynthesis; ubiquinone biosynthesis. Its function is as follows. O-methyltransferase that catalyzes the 2 O-methylation steps in the ubiquinone biosynthetic pathway. This chain is Ubiquinone biosynthesis O-methyltransferase, found in Cereibacter sphaeroides (strain KD131 / KCTC 12085) (Rhodobacter sphaeroides).